The sequence spans 237 residues: Uridylate kinase (237 aa).

Position 10 to 13 (10 to 13 (KLSG)) interacts with ATP. Residue Gly-52 participates in UMP binding. 2 residues coordinate ATP: Gly-53 and Arg-57. UMP-binding positions include Asp-72 and 133 to 140 (TGNPFFTT). ATP-binding residues include Thr-160, Tyr-166, and Asp-169.

This sequence belongs to the UMP kinase family. In terms of assembly, homohexamer.

Its subcellular location is the cytoplasm. It catalyses the reaction UMP + ATP = UDP + ADP. It functions in the pathway pyrimidine metabolism; CTP biosynthesis via de novo pathway; UDP from UMP (UMPK route): step 1/1. Inhibited by UTP. Catalyzes the reversible phosphorylation of UMP to UDP. The chain is Uridylate kinase from Thiobacillus denitrificans (strain ATCC 25259 / T1).